We begin with the raw amino-acid sequence, 284 residues long: Kynurenine formamidase avaC (284 aa).

The HGGXW motif lies at 47–51; that stretch reads HGGGW. Residue Ser130 is the Nucleophile of the active site.

It belongs to the kynurenine formamidase family.

The enzyme catalyses N-formyl-L-kynurenine + H2O = L-kynurenine + formate + H(+). The protein operates within secondary metabolite metabolism. Functionally, kynurenine formamidase; part of the cluster that mediates the biosynthesis of a highly modified cyclo-arginine-tryptophan dipeptide (cRW). Within the pathway, avaC catalyzes the deformylation of the cyclo-Arg-formylkynurenine iketopiperazine (DKP), produced by the FAD-dependent monooxygenase avaB. The first step of the pathway is perfornmed by the arginine-containing cyclodipeptide synthase (RCPDS) avaA that acts as the scaffold-generating enzyme and is responsible for formation of the cyclo-Arg-Trp (cRW) diketopiperazine. AvaB then acts as a multifunctional flavoenzyme that is responsible for generating the cyclo-Arg-formylkynurenine DKP, which can be deformylated by avaC. AvaB then further catalyzes an additional N-oxidation followed by cyclization and dehydration. The next step is an N-acetylation of the guanidine group catalyzed by the arginine N-acetyltransferase avaD. The roles of the additional enzymes identified within the ava cluster still have to be determined. The polypeptide is Kynurenine formamidase avaC (Aspergillus versicolor).